Here is a 743-residue protein sequence, read N- to C-terminus: F-box protein COS111 (743 aa).

An F-box domain is found at 145-191; that stretch reads ELHIKNLPVEILDYIFYLVDDNLDYKSCMYTCKLFYFLAKPYYYENL. 2 disordered regions span residues 224-257 and 311-330; these read IKPG…DPQY and FSNV…SSST. A compositionally biased stretch (acidic residues) spans 229 to 248; it reads DEDEQEEGQEENAENGEEEN.

Functionally, F-box protein probably involved in ubiquitin conjugation pathway. The chain is F-box protein COS111 (COS111) from Candida albicans (strain SC5314 / ATCC MYA-2876) (Yeast).